Here is a 149-residue protein sequence, read N- to C-terminus: Ribonuclease H (149 aa).

The RNase H type-1 domain maps to 1-145 (MKKVIIYTDG…CDKLANEAMD (145 aa)). Positions 9, 50, 72, and 137 each coordinate Mg(2+).

This sequence belongs to the RNase H family. As to quaternary structure, monomer. The cofactor is Mg(2+).

It is found in the cytoplasm. The catalysed reaction is Endonucleolytic cleavage to 5'-phosphomonoester.. In terms of biological role, endonuclease that specifically degrades the RNA of RNA-DNA hybrids. This Clostridium botulinum (strain ATCC 19397 / Type A) protein is Ribonuclease H.